A 112-amino-acid chain; its full sequence is ATP synthase epsilon chain (112 aa).

It belongs to the ATPase epsilon chain family. F-type ATPases have 2 components, CF(1) - the catalytic core - and CF(0) - the membrane proton channel. CF(1) has five subunits: alpha(3), beta(3), gamma(1), delta(1), epsilon(1). CF(0) has three main subunits: a, b and c.

It localises to the cell inner membrane. Produces ATP from ADP in the presence of a proton gradient across the membrane. This Rickettsia peacockii (strain Rustic) protein is ATP synthase epsilon chain.